The primary structure comprises 397 residues: Serpin B10 (397 aa).

The Nuclear localization signal signature appears at 74–77 (KKRK).

It belongs to the serpin family. Ov-serpin subfamily. Expressed in many tissues, including brain, heart, kidney, liver, lung, prostate, skin, spleen and stomach.

The protein resides in the nucleus. Its subcellular location is the cytoplasm. Functionally, protease inhibitor that may play a role in the regulation of protease activities during hematopoiesis and apoptosis induced by TNF. May regulate protease activities in the cytoplasm and in the nucleus. Inhibits plasmin. The protein is Serpin B10 (Serpinb10) of Rattus norvegicus (Rat).